Here is a 307-residue protein sequence, read N- to C-terminus: Ribonuclease HIII (307 aa).

The 215-residue stretch at Met-93 to Leu-307 folds into the RNase H type-2 domain. Asp-99, Glu-100, and Asp-204 together coordinate a divalent metal cation.

It belongs to the RNase HII family. RnhC subfamily. It depends on Mn(2+) as a cofactor. Mg(2+) serves as cofactor.

The protein localises to the cytoplasm. The enzyme catalyses Endonucleolytic cleavage to 5'-phosphomonoester.. In terms of biological role, endonuclease that specifically degrades the RNA of RNA-DNA hybrids. The sequence is that of Ribonuclease HIII from Bacillus pumilus (strain SAFR-032).